Consider the following 450-residue polypeptide: 23S rRNA (uracil(1939)-C(5))-methyltransferase RlmD (450 aa).

Residues 15–73 (KAVPAKNLTVTVASLDPFGQGVARHEGKTVFVTGVLPGEQAEVQLTEEKRQFSHAKLKR) form the TRAM domain. 4 residues coordinate [4Fe-4S] cluster: C86, C92, C95, and C173. S-adenosyl-L-methionine contacts are provided by Q276, F305, N310, E326, N353, and D374. Catalysis depends on C400, which acts as the Nucleophile.

The protein belongs to the class I-like SAM-binding methyltransferase superfamily. RNA M5U methyltransferase family. RlmD subfamily.

The enzyme catalyses uridine(1939) in 23S rRNA + S-adenosyl-L-methionine = 5-methyluridine(1939) in 23S rRNA + S-adenosyl-L-homocysteine + H(+). Functionally, catalyzes the formation of 5-methyl-uridine at position 1939 (m5U1939) in 23S rRNA. This is 23S rRNA (uracil(1939)-C(5))-methyltransferase RlmD from Pectobacterium atrosepticum (strain SCRI 1043 / ATCC BAA-672) (Erwinia carotovora subsp. atroseptica).